A 293-amino-acid chain; its full sequence is MSSGGGSRGLLAWLLLLQPWPGQNWAGMAAPRLPSPLLSEEGGENPEASPAPGPEAGPPLNLFTSFPGDSLLCGRTPLRIVGGVDAEEGRWPWQVSVRTKGRHICGGTLVTATWVLTAGHCISSRFHYSVKMGDRSVYNENTSVVVSVQRAFVHPKFSTVTTIRNDLALLQLQHPVNFTSNIQPICIPQENFQVEGRTRCWVTGWGKTPEREKLASEILQDVDQYIMCYEECNKIIQKALSSTKDVIIKGMVCGYKEQGKDSCQGDSGGRLACEYNDTWVQVGIVSWGIGCGR.

An N-terminal signal peptide occupies residues 1–26 (MSSGGGSRGLLAWLLLLQPWPGQNWA). A disordered region spans residues 33–60 (LPSPLLSEEGGENPEASPAPGPEAGPPL). Residues 80-293 (IVGGVDAEEG…IVSWGIGCGR (214 aa)) form the Peptidase S1 domain. Cysteines 105 and 121 form a disulfide. His-120 serves as the catalytic Charge relay system. Asn-141 carries N-linked (GlcNAc...) asparagine glycosylation. Asp-166 (charge relay system) is an active-site residue. N-linked (GlcNAc...) asparagine glycosylation is present at Asn-177. 3 disulfide bridges follow: Cys-200–Cys-273, Cys-232–Cys-253, and Cys-263–Cys-291. The Charge relay system role is filled by Ser-267. Asn-276 carries an N-linked (GlcNAc...) asparagine glycan.

Belongs to the peptidase S1 family.

Its subcellular location is the cytoplasm. It localises to the cell membrane. Its function is as follows. Plays a role in spermatogenesis. Involved in germ cell survival during meiosis. This is Putative serine protease 42 from Homo sapiens (Human).